Reading from the N-terminus, the 521-residue chain is Cytochrome P450 52A9 (521 aa).

C468 contacts heme.

This sequence belongs to the cytochrome P450 family. Heme serves as cofactor.

The protein resides in the membrane. In terms of biological role, together with an NADPH cytochrome P450 the enzyme system catalyzes the terminal hydroxylation as the first step in the assimilation of alkanes and fatty acids. The sequence is that of Cytochrome P450 52A9 (CYP52A9) from Candida maltosa (Yeast).